A 295-amino-acid chain; its full sequence is Deleted in azoospermia-like (295 aa).

A compositionally biased stretch (polar residues) spans 1–10 (MSTANPETPN). Residues 1 to 25 (MSTANPETPNSTISREASTQSSSAA) are disordered. A compositionally biased stretch (low complexity) spans 11-25 (STISREASTQSSSAA). Positions 40 to 115 (NTVFVGGIDV…KKLKLGPAIR (76 aa)) constitute an RRM domain. Positions 80–132 (KGYGFVSFFNDVDVQKIVESQINFHGKKLKLGPAIRKQNLCAYHVQPRPLVFN) are homodimerization. Residues 167-190 (AYPTYPNSPVQVITGYQLPVYNYQ) enclose the DAZ domain. Residue Tyr276 is modified to Phosphotyrosine.

The protein belongs to the RRM DAZ family. Homodimer and heterodimer. Multiple DAZL RRMs can bind to a single RNA containing multiple GUU triplets. Forms a heterodimer with DAZ. Interacts with BOLL, DAZAP1 and DAZAP2. Interacts with PUM2. Testis specific.

The protein resides in the cytoplasm. It is found in the nucleus. Its function is as follows. RNA-binding protein, which is essential for gametogenesis in both males and females. Plays a central role during spermatogenesis. Acts by binding to the 3'-UTR of mRNA, specifically recognizing GUU triplets, and thereby regulating the translation of key transcripts. This is Deleted in azoospermia-like (DAZL) from Homo sapiens (Human).